A 163-amino-acid polypeptide reads, in one-letter code: Anthranilate 1,2-dioxygenase small subunit (163 aa).

Belongs to the bacterial ring-hydroxylating dioxygenase beta subunit family. In terms of assembly, the anthranilate dioxygenase (AntDO) multicomponent enzyme system is composed of an oxygenase component and a NADH:acceptor reductase component (AntC). The oxygenase component is a heterohexamer of 3 large (AntA) and 3 small (AntB) subunits.

It catalyses the reaction anthranilate + NADH + O2 + 3 H(+) = catechol + NH4(+) + CO2 + NAD(+). The enzyme catalyses anthranilate + NADPH + O2 + 3 H(+) = catechol + NH4(+) + CO2 + NADP(+). It participates in aromatic compound metabolism; anthranilate degradation via hydroxylation; catechol from anthranilate: step 1/1. Its function is as follows. Component of anthranilate dioxygenase multicomponent enzyme system which catalyzes the incorporation of both atoms of molecular oxygen into anthranilate to form catechol. The chain is Anthranilate 1,2-dioxygenase small subunit from Acinetobacter baylyi (strain ATCC 33305 / BD413 / ADP1).